The primary structure comprises 363 residues: MSHPLTFLGIESSCDDTAAAVVRAAERAEILSSVVDGQAALHAPFGGVVPEIAARAHAERLDLCVERALQEAGLGLGDLDGIAVTAGPGLIGGVLSGVMLAKGLAAGTGLPLVGVNHLAGHALTPRLTDALAFPYLMLLVSGGHCQFLIARGAEAFSRLGGSIDDAPGEAFDKTAKLLGLPQPGGPSVEAEAATGDPRRFAFPRPMLDRPGCDMSFSGLKTALLRARDGIVAEKGGITRQDRADLCAGFQAAVVDVLAEKTRRALAIYAEEQAPVPALAVAGGVAANGPIRAALTRVAEEAGARFLAPPLRLCTDNAAMIAWAGIERFRAGGRDGMDLQARPRWPLDQSAPALIGSGRKGAKA.

Residues histidine 117 and histidine 121 each contribute to the Fe cation site. Substrate contacts are provided by residues 139 to 143 (LVSGG), aspartate 172, glycine 185, and asparagine 287. Aspartate 315 provides a ligand contact to Fe cation.

The protein belongs to the KAE1 / TsaD family. Fe(2+) serves as cofactor.

It is found in the cytoplasm. The enzyme catalyses L-threonylcarbamoyladenylate + adenosine(37) in tRNA = N(6)-L-threonylcarbamoyladenosine(37) in tRNA + AMP + H(+). Required for the formation of a threonylcarbamoyl group on adenosine at position 37 (t(6)A37) in tRNAs that read codons beginning with adenine. Is involved in the transfer of the threonylcarbamoyl moiety of threonylcarbamoyl-AMP (TC-AMP) to the N6 group of A37, together with TsaE and TsaB. TsaD likely plays a direct catalytic role in this reaction. The sequence is that of tRNA N6-adenosine threonylcarbamoyltransferase from Cereibacter sphaeroides (strain ATCC 17025 / ATH 2.4.3) (Rhodobacter sphaeroides).